The chain runs to 422 residues: DNA-directed RNA polymerase III subunit RPC4 (422 aa).

Disordered regions lie at residues 1–80 (MSSN…GQQR), 115–190 (KSEG…DDEE), 219–244 (IQEALSEKPTREPTPSVKTEPVGTGL), and 318–350 (RPAVKEEKEDMETQASDPSKKKKNIKKKDTKDA). A Nuclear localization signal motif is present at residues 25–29 (KPSLK). Basic residues predominate over residues 28-37 (LKFKPKAVAR). The segment covering 38–64 (KSKEEREAAASKVKLEEESKRGNDKKH) has biased composition (basic and acidic residues). Phosphoserine occurs at positions 137 and 138. Acidic residues predominate over residues 138–148 (SENEAEDDDNE). Basic and acidic residues predominate over residues 160 to 170 (MGKEFEARNLI). Residues Ser-178, Ser-182, and Ser-224 each carry the phosphoserine modification. Basic and acidic residues predominate over residues 219–229 (IQEALSEKPTR). Thr-228 and Thr-232 each carry phosphothreonine.

Belongs to the eukaryotic RPC4/POLR3D RNA polymerase subunit family. As to quaternary structure, component of the RNA polymerase III (Pol III) complex consisting of 17 subunits. Interacts with RPC37/RPC5. RPC53/RPC4, RPC37/RPC5 and RPC11/RPC10 probably form a Pol III subcomplex.

It is found in the nucleus. Functionally, DNA-dependent RNA polymerase catalyzes the transcription of DNA into RNA using the four ribonucleoside triphosphates as substrates. Specific peripheric component of RNA polymerase III which synthesizes small RNAs, such as 5S rRNA and tRNAs. Essential for tRNA synthesis. The RPC53/RPC4-RPC37/RPC5 subcomplex is required for terminator recognition and reinitiation. In Saccharomyces cerevisiae (strain ATCC 204508 / S288c) (Baker's yeast), this protein is DNA-directed RNA polymerase III subunit RPC4 (RPC53).